The sequence spans 74 residues: U3-agatoxin-Ao1g (74 aa).

An N-terminal signal peptide occupies residues 1-20 (MRAIISLLLISTMVFGVIEA). Residues 21–34 (VSVEEGLKIFEGER) constitute a propeptide that is removed on maturation. Intrachain disulfides connect cysteine 37-cysteine 53, cysteine 44-cysteine 58, cysteine 52-cysteine 68, and cysteine 60-cysteine 66. Asparagine amide is present on asparagine 72.

The protein belongs to the neurotoxin 07 (Beta/delta-agtx) family. 03 (aga-4) subfamily. Aga sub-subfamily. In terms of tissue distribution, expressed by the venom gland.

Its subcellular location is the secreted. Its function is as follows. Insecticidal neurotoxin that modulates the insect Nav channel (DmNaV1/tipE (para/tipE)) in a unique manner, with both the activation and inactivation processes being affected. The voltage dependence of activation is shifted toward more hyperpolarized potentials (analogous to site 4 toxins) and a non-inactivating persistent sodium current is induced (site 3-like action). Interestingly, both effects take place in a voltage-dependent manner, producing a bell-shaped curve between -80 and 0 mV. This is U3-agatoxin-Ao1g from Agelena orientalis (Funnel-web spider).